A 104-amino-acid polypeptide reads, in one-letter code: Large ribosomal subunit protein uL24 (104 aa).

Positions 41 to 61 are disordered; sequence ISKKHKKPTPNEKQSGGIFEK.

Belongs to the universal ribosomal protein uL24 family. In terms of assembly, part of the 50S ribosomal subunit.

Its function is as follows. One of two assembly initiator proteins, it binds directly to the 5'-end of the 23S rRNA, where it nucleates assembly of the 50S subunit. In terms of biological role, one of the proteins that surrounds the polypeptide exit tunnel on the outside of the subunit. This Wigglesworthia glossinidia brevipalpis protein is Large ribosomal subunit protein uL24.